The sequence spans 360 residues: Probable dual-specificity RNA methyltransferase RlmN (360 aa).

Glu-91 acts as the Proton acceptor in catalysis. The Radical SAM core domain occupies 97–335; it reads QHYGQSVCVT…CVVRQEHGTD (239 aa). A disulfide bond links Cys-104 and Cys-340. [4Fe-4S] cluster-binding residues include Cys-111, Cys-115, and Cys-118. S-adenosyl-L-methionine is bound by residues 163–164, Ser-195, 218–220, and Asn-296; these read GE and SLH. Cys-340 (S-methylcysteine intermediate) is an active-site residue.

It belongs to the radical SAM superfamily. RlmN family. [4Fe-4S] cluster is required as a cofactor.

It is found in the cytoplasm. It carries out the reaction adenosine(2503) in 23S rRNA + 2 reduced [2Fe-2S]-[ferredoxin] + 2 S-adenosyl-L-methionine = 2-methyladenosine(2503) in 23S rRNA + 5'-deoxyadenosine + L-methionine + 2 oxidized [2Fe-2S]-[ferredoxin] + S-adenosyl-L-homocysteine. It catalyses the reaction adenosine(37) in tRNA + 2 reduced [2Fe-2S]-[ferredoxin] + 2 S-adenosyl-L-methionine = 2-methyladenosine(37) in tRNA + 5'-deoxyadenosine + L-methionine + 2 oxidized [2Fe-2S]-[ferredoxin] + S-adenosyl-L-homocysteine. Functionally, specifically methylates position 2 of adenine 2503 in 23S rRNA and position 2 of adenine 37 in tRNAs. The chain is Probable dual-specificity RNA methyltransferase RlmN from Streptococcus equi subsp. zooepidemicus (strain MGCS10565).